The chain runs to 237 residues: Sugar fermentation stimulation protein homolog (237 aa).

This sequence belongs to the SfsA family.

The polypeptide is Sugar fermentation stimulation protein homolog (Thioalkalivibrio sulfidiphilus (strain HL-EbGR7)).